The sequence spans 89 residues: MTENRANRKIRIGTVSSDKMDKTITVSVETVKQHPLYKKTIKTSKKYKAHDENNEAKTGDIVKIMETRPLSKDKRWRLVEIVQKAKTLQ.

This sequence belongs to the universal ribosomal protein uS17 family. As to quaternary structure, part of the 30S ribosomal subunit.

One of the primary rRNA binding proteins, it binds specifically to the 5'-end of 16S ribosomal RNA. This Syntrophomonas wolfei subsp. wolfei (strain DSM 2245B / Goettingen) protein is Small ribosomal subunit protein uS17.